A 276-amino-acid chain; its full sequence is Shikimate dehydrogenase (NADP(+)) (276 aa).

Shikimate contacts are provided by residues 15-17 and Thr-62; that span reads SKS. The active-site Proton acceptor is Lys-66. Glu-78 serves as a coordination point for NADP(+). Residues Asn-87 and Asp-103 each contribute to the shikimate site. Residues 128–132 and Ile-217 each bind NADP(+); that span reads GAGGA. Residue Tyr-219 coordinates shikimate. An NADP(+)-binding site is contributed by Gly-240.

It belongs to the shikimate dehydrogenase family. Homodimer.

The catalysed reaction is shikimate + NADP(+) = 3-dehydroshikimate + NADPH + H(+). The protein operates within metabolic intermediate biosynthesis; chorismate biosynthesis; chorismate from D-erythrose 4-phosphate and phosphoenolpyruvate: step 4/7. In terms of biological role, involved in the biosynthesis of the chorismate, which leads to the biosynthesis of aromatic amino acids. Catalyzes the reversible NADPH linked reduction of 3-dehydroshikimate (DHSA) to yield shikimate (SA). This is Shikimate dehydrogenase (NADP(+)) from Lysinibacillus sphaericus (strain C3-41).